Here is a 553-residue protein sequence, read N- to C-terminus: Dihydroxy-acid dehydratase (553 aa).

D78 contacts Mg(2+). Position 119 (C119) interacts with [2Fe-2S] cluster. Mg(2+)-binding residues include D120 and K121. Position 121 is an N6-carboxylysine (K121). C193 lines the [2Fe-2S] cluster pocket. Residue E441 coordinates Mg(2+). The active-site Proton acceptor is S467.

The protein belongs to the IlvD/Edd family. Homodimer. It depends on [2Fe-2S] cluster as a cofactor. Mg(2+) is required as a cofactor.

It catalyses the reaction (2R)-2,3-dihydroxy-3-methylbutanoate = 3-methyl-2-oxobutanoate + H2O. It carries out the reaction (2R,3R)-2,3-dihydroxy-3-methylpentanoate = (S)-3-methyl-2-oxopentanoate + H2O. Its pathway is amino-acid biosynthesis; L-isoleucine biosynthesis; L-isoleucine from 2-oxobutanoate: step 3/4. It functions in the pathway amino-acid biosynthesis; L-valine biosynthesis; L-valine from pyruvate: step 3/4. Functionally, functions in the biosynthesis of branched-chain amino acids. Catalyzes the dehydration of (2R,3R)-2,3-dihydroxy-3-methylpentanoate (2,3-dihydroxy-3-methylvalerate) into 2-oxo-3-methylpentanoate (2-oxo-3-methylvalerate) and of (2R)-2,3-dihydroxy-3-methylbutanoate (2,3-dihydroxyisovalerate) into 2-oxo-3-methylbutanoate (2-oxoisovalerate), the penultimate precursor to L-isoleucine and L-valine, respectively. This is Dihydroxy-acid dehydratase from Pelobacter propionicus (strain DSM 2379 / NBRC 103807 / OttBd1).